Consider the following 149-residue polypeptide: 3-dehydroquinate dehydratase (149 aa).

Y26 (proton acceptor) is an active-site residue. Substrate is bound by residues N78, H84, and D91. H104 acts as the Proton donor in catalysis. Substrate-binding positions include 105 to 106 (LS) and R115.

The protein belongs to the type-II 3-dehydroquinase family. As to quaternary structure, homododecamer.

The enzyme catalyses 3-dehydroquinate = 3-dehydroshikimate + H2O. The protein operates within metabolic intermediate biosynthesis; chorismate biosynthesis; chorismate from D-erythrose 4-phosphate and phosphoenolpyruvate: step 3/7. Functionally, catalyzes a trans-dehydration via an enolate intermediate. This Polynucleobacter asymbioticus (strain DSM 18221 / CIP 109841 / QLW-P1DMWA-1) (Polynucleobacter necessarius subsp. asymbioticus) protein is 3-dehydroquinate dehydratase.